The following is a 661-amino-acid chain: Acetyl-coenzyme A synthetase (661 aa).

CoA is bound by residues 197–200 (RGGK) and T320. ATP contacts are provided by residues 396-398 (GEP), 420-425 (DTWWQT), D511, and R526. Residue S534 coordinates CoA. R537 lines the ATP pocket. Mg(2+)-binding residues include V548 and V553. Position 620 is an N6-acetyllysine (K620).

It belongs to the ATP-dependent AMP-binding enzyme family. It depends on Mg(2+) as a cofactor. Post-translationally, acetylated. Deacetylation by the SIR2-homolog deacetylase activates the enzyme.

The enzyme catalyses acetate + ATP + CoA = acetyl-CoA + AMP + diphosphate. Functionally, catalyzes the conversion of acetate into acetyl-CoA (AcCoA), an essential intermediate at the junction of anabolic and catabolic pathways. AcsA undergoes a two-step reaction. In the first half reaction, AcsA combines acetate with ATP to form acetyl-adenylate (AcAMP) intermediate. In the second half reaction, it can then transfer the acetyl group from AcAMP to the sulfhydryl group of CoA, forming the product AcCoA. The chain is Acetyl-coenzyme A synthetase from Leptospira interrogans serogroup Icterohaemorrhagiae serovar Lai (strain 56601).